A 310-amino-acid polypeptide reads, in one-letter code: p-hydroxybenzoic acid efflux pump subunit AaeA (310 aa).

A helical membrane pass occupies residues alanine 12–tyrosine 32.

Belongs to the membrane fusion protein (MFP) (TC 8.A.1) family.

The protein resides in the cell inner membrane. Functionally, forms an efflux pump with AaeB. The chain is p-hydroxybenzoic acid efflux pump subunit AaeA from Escherichia coli O17:K52:H18 (strain UMN026 / ExPEC).